The sequence spans 542 residues: Peptide chain release factor 3 (542 aa).

In terms of domain architecture, tr-type G spans aspartate 14 to glycine 283. Residues serine 23–threonine 30, aspartate 91–histidine 95, and asparagine 145–aspartate 148 contribute to the GTP site.

The protein belongs to the TRAFAC class translation factor GTPase superfamily. Classic translation factor GTPase family. PrfC subfamily.

It localises to the cytoplasm. Functionally, increases the formation of ribosomal termination complexes and stimulates activities of RF-1 and RF-2. It binds guanine nucleotides and has strong preference for UGA stop codons. It may interact directly with the ribosome. The stimulation of RF-1 and RF-2 is significantly reduced by GTP and GDP, but not by GMP. The polypeptide is Peptide chain release factor 3 (Trichodesmium erythraeum (strain IMS101)).